Here is a 385-residue protein sequence, read N- to C-terminus: Branched-chain-amino-acid aminotransferase, cytosolic (385 aa).

Lysine 221 carries the N6-(pyridoxal phosphate)lysine modification.

Belongs to the class-IV pyridoxal-phosphate-dependent aminotransferase family. As to quaternary structure, homodimer. Pyridoxal 5'-phosphate serves as cofactor. In terms of tissue distribution, expressed in muscles.

It localises to the cytoplasm. It carries out the reaction L-leucine + 2-oxoglutarate = 4-methyl-2-oxopentanoate + L-glutamate. The catalysed reaction is L-isoleucine + 2-oxoglutarate = (S)-3-methyl-2-oxopentanoate + L-glutamate. The enzyme catalyses L-valine + 2-oxoglutarate = 3-methyl-2-oxobutanoate + L-glutamate. Functionally, catalyzes the first reaction in the catabolism of the essential branched chain amino acids leucine, isoleucine, and valine. This is Branched-chain-amino-acid aminotransferase, cytosolic (BCAT1) from Ovis aries (Sheep).